The chain runs to 769 residues: Glutathione biosynthesis bifunctional protein GshAB (769 aa).

The tract at residues 1-347 is glutamate--cysteine ligase; it reads MLDSFKEDPN…QLADENENNI (347 aa). The ATP-grasp domain occupies 514-768; that stretch reads KLVLAEHDIR…IGDKILDFLF (255 aa). 541–599 provides a ligand contact to ATP; it reads SLFEDKQIVVKPKSTNYGWGISIFKNKFTLEDYQEALNIAFSYDSSVIIEEFIPGDEFR. Positions 721, 738, and 740 each coordinate Mg(2+). 3 residues coordinate Mn(2+): Asp721, Glu738, and Asn740.

This sequence in the N-terminal section; belongs to the glutamate--cysteine ligase type 1 family. Type 2 subfamily. In terms of assembly, monomer. It depends on Mg(2+) as a cofactor. Requires Mn(2+) as cofactor.

It carries out the reaction L-cysteine + L-glutamate + ATP = gamma-L-glutamyl-L-cysteine + ADP + phosphate + H(+). It catalyses the reaction gamma-L-glutamyl-L-cysteine + glycine + ATP = glutathione + ADP + phosphate + H(+). It participates in sulfur metabolism; glutathione biosynthesis; glutathione from L-cysteine and L-glutamate: step 1/2. It functions in the pathway sulfur metabolism; glutathione biosynthesis; glutathione from L-cysteine and L-glutamate: step 2/2. Functionally, synthesizes glutathione from L-glutamate and L-cysteine via gamma-L-glutamyl-L-cysteine. This Listeria monocytogenes serovar 1/2a (strain ATCC BAA-679 / EGD-e) protein is Glutathione biosynthesis bifunctional protein GshAB.